Reading from the N-terminus, the 54-residue chain is Large ribosomal subunit protein bL32c (54 aa).

The segment at Met1 to Trp20 is disordered.

The protein belongs to the bacterial ribosomal protein bL32 family.

It is found in the plastid. Its subcellular location is the chloroplast. This is Large ribosomal subunit protein bL32c (rpl32) from Euglena gracilis.